A 1582-amino-acid polypeptide reads, in one-letter code: Adhesion G protein-coupled receptor B1 (1582 aa).

Residues 1-33 (MRGQAAAPGPIWILAPLLLLLLLLGRWARAASG) form the signal peptide. At 34 to 948 (ADIGPGTEQC…ATMDKVTVPS (915 aa)) the chain is on the extracellular side. N64 is a glycosylation site (N-linked (GlcNAc...) asparagine). Positions 261–315 (AGGWKLWSLWGECTRDCGGGLQTRTRTCLPTLGVEGGGCEGVLEEGRLCNRKACG) constitute a TSP type-1 1 domain. 3 disulfide bridges follow: C273–C309, C277–C314, and C288–C299. Residues 313 to 335 (ACGPTGRSSSRSQSLRSTDARRR) form a disordered region. The span at 319-329 (RSSSRSQSLRS) shows a compositional bias: low complexity. TSP type-1 domains are found at residues 354–407 (DPAA…AVCP), 409–462 (HGAW…ALCP), 467–520 (DGNW…QQCP), and 522–575 (DGKW…QRCP). 14 cysteine pairs are disulfide-bonded: C366–C400, C370–C406, C381–C390, C421–C456, C425–C461, C436–C446, C479–C514, C483–C519, C494–C504, C534–C569, C538–C574, C549–C559, C581–C616, and C604–C634. N401 is a glycosylation site (N-linked (GlcNAc...) asparagine). N607 carries N-linked (GlcNAc...) asparagine glycosylation. T609 carries the phosphothreonine modification. N-linked (GlcNAc...) asparagine glycosylation is found at N692, N844, N877, and N881. Residues 760 to 939 (RDAYQVTDNL…AILAQLSADA (180 aa)) form the GAIN-B domain. Intrachain disulfides connect C884-C921 and C909-C923. Residues 884–939 (CILWDETDGPSSSAPPQLGPWSWRGCRTVPLDALRTRCLCDRLSTFAILAQLSADA) form a GPS region. The N-terminal stalk following vasculostatin-120 cleavage which is not required for signaling activity stretch occupies residues 927–943 (STFAILAQLSADATMDK). Residues 949-969 (VTLIVGCGVSSLTLLMLVIIY) traverse the membrane as a helical segment. The Cytoplasmic segment spans residues 970–980 (VSVWRYIRSER). A helical membrane pass occupies residues 981–1001 (SVILINFCLSIISSNALILIG). The Extracellular portion of the chain corresponds to 1002–1008 (QTQTRNK). A helical transmembrane segment spans residues 1009–1029 (VVCTLVAAFLHFFFLSSFCWV). The Cytoplasmic portion of the chain corresponds to 1030-1052 (LTEAWQSYMAVTGRLRSRLVRKR). A helical transmembrane segment spans residues 1053–1073 (FLCLGWGLPALVVAISVGFTK). Residues 1074–1093 (AKGYSTMNYCWLSLEGGLLY) lie on the Extracellular side of the membrane. Residues 1094-1114 (AFVGPAAAVVLVNMVIGILVF) form a helical membrane-spanning segment. Residues 1115 to 1136 (NKLVSKDGITDKKLKERAGASL) are Cytoplasmic-facing. Residues 1137–1157 (WSSCVVLPLLALTWMSAVLAV) traverse the membrane as a helical segment. Over 1158-1166 (TDRRSALFQ) the chain is Extracellular. Residues 1167–1187 (ILFAVFDSLEGFVIVMVHCIL) traverse the membrane as a helical segment. The Cytoplasmic portion of the chain corresponds to 1188–1582 (RREVQDAVKC…QDIIDLQTEV (395 aa)). An involved in interaction with MAGI1 region spans residues 1363–1582 (YSINIDQMPQ…QDIIDLQTEV (220 aa)). The segment at 1382–1549 (PDASFPTRSP…AWVKKELEPL (168 aa)) is disordered. Residues 1389–1435 (RSPPAREPPGGAPPEVPPVQPPPPPPPPPPPPQQPIPPPPTLEPAPP) are compositionally biased toward pro residues. Positions 1441–1455 (GEPAAHPGPSSGAGA) are enriched in low complexity. Position 1467 is a phosphoserine (S1467). 2 stretches are compositionally biased toward basic and acidic residues: residues 1468 to 1484 (LERR…EKIM) and 1491 to 1520 (QDMF…KPEK). Positions 1579–1582 (QTEV) are indispensable for interaction with MAGI1.

Belongs to the G-protein coupled receptor 2 family. LN-TM7 subfamily. As to quaternary structure, interacts with ELMO1 and DOCK1. When bound to ELMO1 and DOCK1, acts as a module to promote apoptotic cell engulfment. Interacts with MDM2; the interaction results in inhibition of MDM2-mediated ubiquitination and degradation of DLG4/PSD95. Interacts with PARD3 and TIAM1; the interaction is required for correct dendritic localization of PARD3 and TIAM1 and for dendritic spine formation. Interacts with MAGI1, MAGI3 and BAIAP2. Interacts with PHYHIP. Interacts with DLG4 (via PDZ domain). Vasculostatin-120: Interacts with CD36. Vasculostatin-120: Interacts with ARRB2. Interacts with BAIAP3; this interaction is direct. In terms of processing, proteolytically cleaved to produce vasculostatin-40 and vasculostatin-120. Vasculostatin-40 is the major form and is produced through proteolytic cleavage by MMP14 between residues 321 and 329 with cleavage likely to be between Ser-326 and Leu-327. Ubiquitinated. As to expression, in brain, widespread expression in all neuropil-rich zones including spinal cord gray matter, cerebellar molecular layer, cerebral cortex, thalamic nuclei and basal ganglia with no expression in white matter (at protein level). In the cerebellar molecular layer, highly expressed in interneuron processes whereas Purkinje cells and their dendrites show weaker expression (at protein level). In the olfactory bulb, highly expressed in glomeruli (at protein level). In the retina, highly concentrated in the outer and inner plexiform layers (at protein level). Expressed in brain. Enriched in hippocampus and cortex. Also detected in other tissues including bone marrow and spleen.

Its subcellular location is the cell membrane. The protein resides in the cell projection. The protein localises to the phagocytic cup. It localises to the cell junction. It is found in the focal adhesion. Its subcellular location is the dendritic spine. The protein resides in the postsynaptic density. The protein localises to the secreted. Its function is as follows. Phosphatidylserine receptor which enhances the engulfment of apoptotic cells. Also mediates the binding and engulfment of Gram-negative bacteria. Stimulates production of reactive oxygen species by macrophages in response to Gram-negative bacteria, resulting in enhanced microbicidal macrophage activity. In the gastric mucosa, required for recognition and engulfment of apoptotic gastric epithelial cells. Promotes myoblast fusion. Activates the Rho pathway in a G-protein-dependent manner. Inhibits MDM2-mediated ubiquitination and degradation of DLG4/PSD95, promoting DLG4 stability and regulating synaptic plasticity. Required for the formation of dendritic spines by ensuring the correct localization of PARD3 and TIAM1. Potent inhibitor of angiogenesis in brain and may play a significant role as a mediator of the p53/TP53 signal in suppression of glioblastoma. In terms of biological role, inhibits angiogenesis in a CD36-dependent manner. Inhibits angiogenesis. This chain is Adhesion G protein-coupled receptor B1, found in Mus musculus (Mouse).